Consider the following 36-residue polypeptide: Protein YmgL (36 aa).

The sequence is that of Protein YmgL from Escherichia coli (strain K12).